Here is a 146-residue protein sequence, read N- to C-terminus: Ribosomal RNA large subunit methyltransferase H (146 aa).

Residues L62, G94, and 113 to 118 (LGELTL) each bind S-adenosyl-L-methionine.

This sequence belongs to the RNA methyltransferase RlmH family. In terms of assembly, homodimer.

It is found in the cytoplasm. The enzyme catalyses pseudouridine(1915) in 23S rRNA + S-adenosyl-L-methionine = N(3)-methylpseudouridine(1915) in 23S rRNA + S-adenosyl-L-homocysteine + H(+). Functionally, specifically methylates the pseudouridine at position 1915 (m3Psi1915) in 23S rRNA. The protein is Ribosomal RNA large subunit methyltransferase H of Deinococcus radiodurans (strain ATCC 13939 / DSM 20539 / JCM 16871 / CCUG 27074 / LMG 4051 / NBRC 15346 / NCIMB 9279 / VKM B-1422 / R1).